The sequence spans 589 residues: uncharacterized protein (589 aa).

Positions 242–314 (TALEVRNIPE…RFIKIFWYNP (73 aa)) constitute an RRM domain. Disordered regions lie at residues 322 to 348 (PKKF…VDPA), 443 to 465 (ESPA…RGTN), and 566 to 589 (TSME…GRWR). Ser330 bears the Phosphoserine mark. A compositionally biased stretch (low complexity) spans 330 to 340 (SPTTSDSSNVE). Position 332 is a phosphothreonine (Thr332). A Phosphoserine modification is found at Ser334. The span at 566-579 (TSMETGESNTSDNM) shows a compositional bias: polar residues.

Its subcellular location is the nucleus. This is an uncharacterized protein from Schizosaccharomyces pombe (strain 972 / ATCC 24843) (Fission yeast).